We begin with the raw amino-acid sequence, 1271 residues long: MPPTSSQAPFHRYSHLDQRSAPDTQESSPADGNHDPRRQSTSFDHPNLYAQRDVFAVPNHPQSTNLNHQPYLHQGRSGSFEEPIYETPQPGHNVGYEDAEPYGHEQHDGTMWSERPSYSAPYDSDIKAPLDPTPYTPDLEADGMVVKEKKVHATEVMATTNARRWWIRITWMMTWWIPSFLLVHLGRMKRADVRMAWREKLAIFMMICLACAVVLFYIIFFGKLLCPDSDKAWNEKELATHQGDDDYYAAIAGKVYDFTNFYKAQHSDLSSYTTSSALMLEFAGQDLTNYFPMPMTVACPNLVTSTDLTLMYSNFTPIVQYAVHTSGPLQTGTDTKLNDINWYTDTLNPALEDYYKGYYVYDKSSIASGADSDSKYWAIYNNKVYDLSNYIYTISYYSSSSGTDLPNYSFLNSDITDLFQTSAGQDITKDMDEKLSALTAEDAANQMTCLNNAFYLGELDFRKTPRCTVQNYLLLAFSIILIATIASKFLAALQLGSKRQPELLDKFVICQVPCYTEGEESLKRTIDSLAALNYDDKRKLIFIICDGNIVGSGNNRPTPRIVLDLLGVDDKLEAEPLLFKSIGEGSKQLNYGKVYSGLYEFEGHVVPYIVVVKVGKPSEISKPGNRGKRDSQVLLMQYLNRVHFDAPMTPLELEIYHQMRNVIGIDPAFYEYIFQVDADTSVTPDSLNRLIACTADDQQIIGICGETKLANENESLTTMIQVYEYYISHHLTKAFESLFGSVTCLPGCFSVYRIRTAEGGRPVIISSVVIDEYAEPNVDTLHKKNLFSLGEDRYLTTLMMKNFPTFKMKFTPDAIAHTVAPSKWSVLLSQRRRWINSTIHNLVELLFLPEMCGFCFFSMRWVVFLDLLGTIILPATCGYLIYLVIVVSTGKAAIPVISLAMIGATYGLQALIFILKREFMLIGWMLVYILAFPVWSVFLPIYSFWSMDDFSWGNTRKVIGEGNQKTVVIDDDEPFNEGMIPYRTFKEYEWNAWEAASLHSESPAPSEKSQRTTRTGQSYRPHPHSIRSPSFHSSASELPSKADYWRDSSPLGMGNESKRLHQVSSDPSMRGDKSFIRGSKPQVERVQSMAGMSMWGSGSVYDPYKQAMGGPGFLHPMMTGNSLASQATFYPPQTQYPMSMYGSPMMMPMGMPMMGLQYAGNASMAGGAAGPRGTMMTMGMGDQSRISSFSMGGPVAESGAGRLVGLSINEEKEVQDEEVLDKLKTWLSKQDLMSVTKRQTREAIYTLFPNAGLQNRAGWLNEQIDKILSES.

Disordered regions lie at residues 1-45 (MPPT…SFDH) and 58-117 (PNHP…ERPS). Over residues 21–30 (APDTQESSPA) the composition is skewed to polar residues. 2 consecutive transmembrane segments (helical) span residues 165-185 (WWIRITWMMTWWIPSFLLVHL) and 201-221 (LAIFMMICLACAVVLFYIIFF). N407 carries an N-linked (GlcNAc...) asparagine glycan. The chain crosses the membrane as a helical span at residues 473 to 493 (LLLAFSIILIATIASKFLAAL). N-linked (GlcNAc...) asparagine glycans are attached at residues N713 and N836. Transmembrane regions (helical) follow at residues 867-887 (LLGTIILPATCGYLIYLVIVV), 894-914 (IPVISLAMIGATYGLQALIFI), and 919-939 (FMLIGWMLVYILAFPVWSVFL). The segment at 999–1081 (HSESPAPSEK…DKSFIRGSKP (83 aa)) is disordered. The segment covering 1027–1037 (RSPSFHSSASE) has biased composition (polar residues). 2 N-linked (GlcNAc...) asparagine glycosylation sites follow: N1055 and N1161. The DEK-C domain occupies 1213–1269 (EVQDEEVLDKLKTWLSKQDLMSVTKRQTREAIYTLFPNAGLQNRAGWLNEQIDKILS).

It belongs to the chitin synthase family.

It localises to the cell membrane. The enzyme catalyses [(1-&gt;4)-N-acetyl-beta-D-glucosaminyl](n) + UDP-N-acetyl-alpha-D-glucosamine = [(1-&gt;4)-N-acetyl-beta-D-glucosaminyl](n+1) + UDP + H(+). Polymerizes chitin, a structural polymer of the cell wall and septum, by transferring the sugar moiety of UDP-GlcNAc to the non-reducing end of the growing chitin polymer. Produces a large proportion of the chitin that is not deacetylated to chitosan. The sequence is that of Chitin synthase 4 from Cryptococcus neoformans var. grubii serotype A (strain H99 / ATCC 208821 / CBS 10515 / FGSC 9487) (Filobasidiella neoformans var. grubii).